The chain runs to 75 residues: Small ribosomal subunit protein bS18 (75 aa).

The protein belongs to the bacterial ribosomal protein bS18 family. In terms of assembly, part of the 30S ribosomal subunit. Forms a tight heterodimer with protein bS6.

In terms of biological role, binds as a heterodimer with protein bS6 to the central domain of the 16S rRNA, where it helps stabilize the platform of the 30S subunit. This is Small ribosomal subunit protein bS18 from Cereibacter sphaeroides (strain KD131 / KCTC 12085) (Rhodobacter sphaeroides).